Reading from the N-terminus, the 891-residue chain is DNA mismatch repair protein MutS (891 aa).

617-624 lines the ATP pocket; sequence GPNMSGKS. Residues 805–827 show a composition bias toward basic and acidic residues; that stretch reads REKIEEEEPKTKDTKRGPSEKVK. The disordered stretch occupies residues 805-840; the sequence is REKIEEEEPKTKDTKRGPSEKVKNASPTLPRDEKGR.

It belongs to the DNA mismatch repair MutS family.

Its function is as follows. This protein is involved in the repair of mismatches in DNA. It is possible that it carries out the mismatch recognition step. This protein has a weak ATPase activity. The polypeptide is DNA mismatch repair protein MutS (Porphyromonas gingivalis (strain ATCC BAA-308 / W83)).